The chain runs to 245 residues: Carboxy-S-adenosyl-L-methionine synthase (245 aa).

Residues Tyr42, 67 to 69 (GCS), 92 to 93 (DN), 120 to 121 (DI), Asn135, and Arg202 contribute to the S-adenosyl-L-methionine site.

The protein belongs to the class I-like SAM-binding methyltransferase superfamily. Cx-SAM synthase family. Homodimer.

It carries out the reaction prephenate + S-adenosyl-L-methionine = carboxy-S-adenosyl-L-methionine + 3-phenylpyruvate + H2O. Its function is as follows. Catalyzes the conversion of S-adenosyl-L-methionine (SAM) to carboxy-S-adenosyl-L-methionine (Cx-SAM). This chain is Carboxy-S-adenosyl-L-methionine synthase, found in Vibrio vulnificus (strain YJ016).